The sequence spans 398 residues: Cytochrome b561 and DOMON domain-containing protein At3g61750 (398 aa).

The signal sequence occupies residues 1 to 23; it reads MKTLVGFYILCFLIGQDLPFLAA. The DOMON domain maps to 64-177; sequence NTFVLRYSEN…PRRAVILAFS (114 aa). The Cytochrome b561 domain occupies 184 to 377; the sequence is LGRLTKHDDK…LEIFRIRGTI (194 aa). Residue His220 coordinates heme b. The next 2 membrane-spanning stretches (helical) occupy residues 222-242 and 252-272; these read VMAI…ARYL and LHIG…ILGI. 2 residues coordinate heme b: His253 and His285. 3 consecutive transmembrane segments (helical) span residues 287 to 307, 320 to 340, and 351 to 371; these read GIGI…FARP, YHHW…VLGI, and KIGY…LEIF. His321 is a heme b binding site.

The cofactor is heme b.

Its subcellular location is the membrane. In terms of biological role, may act as a catecholamine-responsive trans-membrane electron transporter. The polypeptide is Cytochrome b561 and DOMON domain-containing protein At3g61750 (Arabidopsis thaliana (Mouse-ear cress)).